The chain runs to 422 residues: E3 ubiquitin-protein ligase IE2 (422 aa).

Polar residues predominate over residues 1 to 10 (MSRQINAVTP). Disordered stretches follow at residues 1-86 (MSRQ…VQII) and 165-215 (SPRS…EGEE). The span at 14 to 26 (SRRHRLSLSRRRI) shows a compositional bias: basic residues. Residues 36–63 (PSSSSRSQPSSSSRSQPYSSSRSQPYSS) show a composition bias toward low complexity. The span at 71–80 (ERSQEQRVSE) shows a compositional bias: basic and acidic residues. The segment covering 179–196 (DVLSQSPDLFDSPQSPQQ) has biased composition (polar residues). Residues 200 to 215 (ELEDEDEEEEEEEGEE) show a composition bias toward acidic residues. Residues 220-268 (CNICFTTLKDTKNVDSSFVTSIDCNHAVCFKCYVRIIMDNSTYKCFCSA) form an RING-type; degenerate zinc finger. A coiled-coil region spans residues 314–414 (IDLNDVERLE…RRNSELVAEL (101 aa)).

Belongs to the alphabaculovirus IE2 protein family. In terms of assembly, homooligomer. In terms of processing, auto-ubiquitinated.

The protein resides in the host nucleus. It catalyses the reaction S-ubiquitinyl-[E2 ubiquitin-conjugating enzyme]-L-cysteine + [acceptor protein]-L-lysine = [E2 ubiquitin-conjugating enzyme]-L-cysteine + N(6)-ubiquitinyl-[acceptor protein]-L-lysine.. RING-finger E3 ubiquitin ligase that plays an important regulatory role during the initial stages of infection. Migrates to specific nuclear foci early in infection supposely to prepare the sites for viral replication by targeting and ubiquitinating host proteins. This Bombyx mori nuclear polyhedrosis virus (BmNPV) protein is E3 ubiquitin-protein ligase IE2 (IE2).